Reading from the N-terminus, the 233-residue chain is MPAKQRTPKVNRNPDLIRGVGKYSRSQMYHKRGLWAIKAKNGGVFPRHDAKSKVDAPVEKPPKFYPAEDVKKPLPNRRTAKPTKLRASITPGTVLIILAGRFKGKRVVFLKQLASGLLLVTGPFKINGVPLRRVNQAYVIGTSTKVDISGVTLDKFDDKYFGKVAEKKKKKTEGEFFEAEKEEKKEIPQVKKDDQKAVDAALIKAIEAVPELKTYLGARFSLKQGMKPHELVF.

A compositionally biased stretch (basic and acidic residues) spans 48 to 72 (HDAKSKVDAPVEKPPKFYPAEDVKK). The disordered stretch occupies residues 48–80 (HDAKSKVDAPVEKPPKFYPAEDVKKPLPNRRTA).

This sequence belongs to the eukaryotic ribosomal protein eL6 family.

The sequence is that of Large ribosomal subunit protein eL6x (RPL6C) from Arabidopsis thaliana (Mouse-ear cress).